The chain runs to 1396 residues: Major capsid protein (1396 aa).

This sequence belongs to the herpesviridae major capsid protein family. Homomultimer. Makes the hexons and eleven out of twelve pentons. Interacts with triplex proteins 1/TRX1 and 2/TRX2; adjacent capsomers are linked together in groups of three by triplexes, heterotrimeric complexes composed of one molecule of TRX1 and two molecules of TRX2. Interacts with scaffold protein; this interaction allows efficient MCP transport to the host nucleus. Interacts with capsid vertex component 2/CVC2. Interacts with the small capsomere-interacting protein/SCP.

It is found in the virion. The protein localises to the host nucleus. In terms of biological role, self-assembles to form an icosahedral capsid with a T=16 symmetry, about 200 nm in diameter, and consisting of 150 hexons and 12 pentons (total of 162 capsomers). Hexons form the edges and faces of the capsid and are each composed of six MCP molecules. In contrast, one penton is found at each of the 12 vertices. Eleven of the pentons are MCP pentamers, while the last vertex is occupied by the portal complex. The capsid is surrounded by a layer of proteinaceous material designated the tegument which, in turn, is enclosed in an envelope of host cell-derived lipids containing virus-encoded glycoproteins. This is Major capsid protein from Varicella-zoster virus (strain Dumas) (HHV-3).